Reading from the N-terminus, the 405-residue chain is Tryptophan synthase beta chain (405 aa).

Lys98 bears the N6-(pyridoxal phosphate)lysine mark.

Belongs to the TrpB family. In terms of assembly, tetramer of two alpha and two beta chains. Requires pyridoxal 5'-phosphate as cofactor.

The enzyme catalyses (1S,2R)-1-C-(indol-3-yl)glycerol 3-phosphate + L-serine = D-glyceraldehyde 3-phosphate + L-tryptophan + H2O. The protein operates within amino-acid biosynthesis; L-tryptophan biosynthesis; L-tryptophan from chorismate: step 5/5. The beta subunit is responsible for the synthesis of L-tryptophan from indole and L-serine. In Bradyrhizobium diazoefficiens (strain JCM 10833 / BCRC 13528 / IAM 13628 / NBRC 14792 / USDA 110), this protein is Tryptophan synthase beta chain.